The sequence spans 94 residues: Co-chaperonin GroES (94 aa).

It belongs to the GroES chaperonin family. In terms of assembly, heptamer of 7 subunits arranged in a ring. Interacts with the chaperonin GroEL.

The protein localises to the cytoplasm. Its function is as follows. Together with the chaperonin GroEL, plays an essential role in assisting protein folding. The GroEL-GroES system forms a nano-cage that allows encapsulation of the non-native substrate proteins and provides a physical environment optimized to promote and accelerate protein folding. GroES binds to the apical surface of the GroEL ring, thereby capping the opening of the GroEL channel. This chain is Co-chaperonin GroES, found in Leuconostoc citreum (strain KM20).